The sequence spans 310 residues: Putative methyltransferase mtx subunit H (310 aa).

This sequence belongs to the MtrH family. As to quaternary structure, may be part of a complex composed of 3 subunits; MtxA, MtxH and MtxX.

The chain is Putative methyltransferase mtx subunit H (mtxH) from Methanosarcina mazei (strain ATCC BAA-159 / DSM 3647 / Goe1 / Go1 / JCM 11833 / OCM 88) (Methanosarcina frisia).